We begin with the raw amino-acid sequence, 355 residues long: Anthranilate phosphoribosyltransferase (355 aa).

5-phospho-alpha-D-ribose 1-diphosphate-binding positions include G91, 94-95 (GD), T99, 101-104 (NIST), 119-127 (KHGNRAMSS), and A131. Residue G91 coordinates anthranilate. Mg(2+) is bound at residue S103. N122 is a binding site for anthranilate. R177 contacts anthranilate. 2 residues coordinate Mg(2+): D234 and E235.

It belongs to the anthranilate phosphoribosyltransferase family. In terms of assembly, homodimer. The cofactor is Mg(2+).

It carries out the reaction N-(5-phospho-beta-D-ribosyl)anthranilate + diphosphate = 5-phospho-alpha-D-ribose 1-diphosphate + anthranilate. The protein operates within amino-acid biosynthesis; L-tryptophan biosynthesis; L-tryptophan from chorismate: step 2/5. Participates in the tryptophan-dependent indole-3-acetic acid production, which is a phytohormone released by A.brasilense. Functionally, catalyzes the transfer of the phosphoribosyl group of 5-phosphorylribose-1-pyrophosphate (PRPP) to anthranilate to yield N-(5'-phosphoribosyl)-anthranilate (PRA). In Azospirillum brasilense, this protein is Anthranilate phosphoribosyltransferase.